We begin with the raw amino-acid sequence, 227 residues long: Cytochrome c oxidase subunit 2 (227 aa).

The Mitochondrial intermembrane portion of the chain corresponds to 1–14 (MACPVQLGFQDAAS). A helical membrane pass occupies residues 15–45 (PIMEELTYFHDHTLMIVFLISSLVLYIISLM). Topologically, residues 46–59 (LTTELTHTSTMDAQ) are mitochondrial matrix. Residues 60–87 (EVETVWTILPAVILILIALPSLRILYMM) traverse the membrane as a helical segment. Residues 88–227 (DEITTPSLTL…HFEEWLLAML (140 aa)) are Mitochondrial intermembrane-facing. Cu cation contacts are provided by His161, Cys196, Glu198, Cys200, His204, and Met207. Glu198 lines the Mg(2+) pocket.

This sequence belongs to the cytochrome c oxidase subunit 2 family. Component of the cytochrome c oxidase (complex IV, CIV), a multisubunit enzyme composed of 14 subunits. The complex is composed of a catalytic core of 3 subunits MT-CO1, MT-CO2 and MT-CO3, encoded in the mitochondrial DNA, and 11 supernumerary subunits COX4I, COX5A, COX5B, COX6A, COX6B, COX6C, COX7A, COX7B, COX7C, COX8 and NDUFA4, which are encoded in the nuclear genome. The complex exists as a monomer or a dimer and forms supercomplexes (SCs) in the inner mitochondrial membrane with NADH-ubiquinone oxidoreductase (complex I, CI) and ubiquinol-cytochrome c oxidoreductase (cytochrome b-c1 complex, complex III, CIII), resulting in different assemblies (supercomplex SCI(1)III(2)IV(1) and megacomplex MCI(2)III(2)IV(2)). Found in a complex with TMEM177, COA6, COX18, COX20, SCO1 and SCO2. Interacts with TMEM177 in a COX20-dependent manner. Interacts with COX20. Interacts with COX16. Cu cation serves as cofactor.

The protein resides in the mitochondrion inner membrane. The catalysed reaction is 4 Fe(II)-[cytochrome c] + O2 + 8 H(+)(in) = 4 Fe(III)-[cytochrome c] + 2 H2O + 4 H(+)(out). Its function is as follows. Component of the cytochrome c oxidase, the last enzyme in the mitochondrial electron transport chain which drives oxidative phosphorylation. The respiratory chain contains 3 multisubunit complexes succinate dehydrogenase (complex II, CII), ubiquinol-cytochrome c oxidoreductase (cytochrome b-c1 complex, complex III, CIII) and cytochrome c oxidase (complex IV, CIV), that cooperate to transfer electrons derived from NADH and succinate to molecular oxygen, creating an electrochemical gradient over the inner membrane that drives transmembrane transport and the ATP synthase. Cytochrome c oxidase is the component of the respiratory chain that catalyzes the reduction of oxygen to water. Electrons originating from reduced cytochrome c in the intermembrane space (IMS) are transferred via the dinuclear copper A center (CU(A)) of subunit 2 and heme A of subunit 1 to the active site in subunit 1, a binuclear center (BNC) formed by heme A3 and copper B (CU(B)). The BNC reduces molecular oxygen to 2 water molecules using 4 electrons from cytochrome c in the IMS and 4 protons from the mitochondrial matrix. The polypeptide is Cytochrome c oxidase subunit 2 (MT-CO2) (Cheirogaleus medius (Fat-tailed dwarf lemur)).